The sequence spans 93 residues: Large ribosomal subunit protein eL42 (93 aa).

C11, C14, C71, and C74 together coordinate Zn(2+). The C4-type zinc finger occupies 11–74; sequence CRYCGKHTLH…VNIRFRCTEC (64 aa).

It belongs to the eukaryotic ribosomal protein eL42 family. In terms of assembly, part of the 50S ribosomal subunit. Zn(2+) serves as cofactor.

Binds to the 23S rRNA. This is Large ribosomal subunit protein eL42 from Archaeoglobus fulgidus (strain ATCC 49558 / DSM 4304 / JCM 9628 / NBRC 100126 / VC-16).